The sequence spans 342 residues: Glutamyl endopeptidase (342 aa).

A signal peptide spans 1-29 (MKGKFLKVSSLFVATLTTATLVSSPAANA). A propeptide spanning residues 30-68 (LSSKAMDNHPQQTQSSKQQTPKIKKGGNLKPLEQREHAN) is cleaved from the precursor. The tract at residues 33–63 (KAMDNHPQQTQSSKQQTPKIKKGGNLKPLEQ) is disordered. Positions 39–50 (PQQTQSSKQQTP) are enriched in low complexity. Residues histidine 119, aspartate 161, and serine 237 each act as charge relay system in the active site. The segment at 283 to 342 (FANDDQPNNPDNPDNPNNPDNPNNPDNPNNPDEPNNPDNPNNPDNPDNGDNNNSDNPDAA) is disordered. Residues 286–342 (DDQPNNPDNPDNPNNPDNPNNPDNPNNPDEPNNPDNPNNPDNPDNGDNNNSDNPDAA) show a composition bias toward low complexity. 13 consecutive repeat copies span residues 289–291 (PNN), 292–294 (PDN), 295–297 (PDN), 298–300 (PNN), 301–303 (PDN), 304–306 (PNN), 307–309 (PDN), 310–312 (PNN), 316–318 (PNN), 319–321 (PDN), 322–324 (PNN), 325–327 (PDN), and 328–330 (PDN). Residues 289–330 (PNNPDNPDNPNNPDNPNNPDNPNNPDEPNNPDNPNNPDNPDN) are 13 X 3 AA repeats of P-[DN]-N.

Belongs to the peptidase S1B family. In terms of processing, proteolytically cleaved by aureolysin (aur). This cleavage leads to the activation of SspA.

Its subcellular location is the secreted. The enzyme catalyses Preferential cleavage: Glu-|-Xaa, Asp-|-Xaa.. Functionally, preferentially cleaves peptide bonds on the carboxyl-terminal side of aspartate and glutamate. Along with other extracellular proteases it is involved in colonization and infection of human tissues. Required for proteolytic maturation of thiol protease SspB and inactivation of SspC, an inhibitor of SspB. It is the most important protease for degradation of fibronectin-binding protein (FnBP) and surface protein A, which are involved in adherence to host cells. May also protect bacteria against host defense mechanism by cleaving the immunoglobulin classes IgG, IgA and IgM. May be involved in the stability of secreted lipases. The chain is Glutamyl endopeptidase (sspA) from Staphylococcus aureus (strain Mu50 / ATCC 700699).